Here is a 464-residue protein sequence, read N- to C-terminus: Anthranilate synthase component 1 (464 aa).

L-tryptophan contacts are provided by residues serine 41 and 236–238; that span reads PYM. Position 271–272 (271–272) interacts with chorismate; it reads GT. Glutamate 298 provides a ligand contact to Mg(2+). Chorismate-binding positions include tyrosine 386, arginine 406, 420–422, and glycine 422; that span reads GAG. Glutamate 435 serves as a coordination point for Mg(2+).

Belongs to the anthranilate synthase component I family. As to quaternary structure, heterotetramer consisting of two non-identical subunits: a beta subunit (TrpG) and a large alpha subunit (TrpE). The cofactor is Mg(2+).

It carries out the reaction chorismate + L-glutamine = anthranilate + pyruvate + L-glutamate + H(+). Its pathway is amino-acid biosynthesis; L-tryptophan biosynthesis; L-tryptophan from chorismate: step 1/5. Its activity is regulated as follows. Feedback inhibited by tryptophan. Functionally, part of a heterotetrameric complex that catalyzes the two-step biosynthesis of anthranilate, an intermediate in the biosynthesis of L-tryptophan. In the first step, the glutamine-binding beta subunit (TrpG) of anthranilate synthase (AS) provides the glutamine amidotransferase activity which generates ammonia as a substrate that, along with chorismate, is used in the second step, catalyzed by the large alpha subunit of AS (TrpE) to produce anthranilate. In the absence of TrpG, TrpE can synthesize anthranilate directly from chorismate and high concentrations of ammonia. This Methanothermobacter thermautotrophicus (strain ATCC 29096 / DSM 1053 / JCM 10044 / NBRC 100330 / Delta H) (Methanobacterium thermoautotrophicum) protein is Anthranilate synthase component 1 (trpE).